We begin with the raw amino-acid sequence, 144 residues long: 3-dehydroquinate dehydratase (144 aa).

The active-site Proton acceptor is the Tyr22. Asn73, His79, and Asp86 together coordinate substrate. The active-site Proton donor is His99. Residues 100 to 101 (LS) and Arg110 each bind substrate.

This sequence belongs to the type-II 3-dehydroquinase family. In terms of assembly, homododecamer.

The enzyme catalyses 3-dehydroquinate = 3-dehydroshikimate + H2O. Its pathway is metabolic intermediate biosynthesis; chorismate biosynthesis; chorismate from D-erythrose 4-phosphate and phosphoenolpyruvate: step 3/7. In terms of biological role, catalyzes a trans-dehydration via an enolate intermediate. This chain is 3-dehydroquinate dehydratase, found in Trichlorobacter lovleyi (strain ATCC BAA-1151 / DSM 17278 / SZ) (Geobacter lovleyi).